Here is a 1134-residue protein sequence, read N- to C-terminus: DENN domain-containing protein 2B (1134 aa).

Positions 1–13 are enriched in polar residues; that stretch reads MTMTANKNSSITH. A disordered region spans residues 1–90; the sequence is MTMTANKNSS…DPSPETSPPI (90 aa). S30 and S32 each carry phosphoserine. Residues 32 to 43 show a composition bias toward pro residues; the sequence is SPPPVLYPPRSP. T228 is modified (phosphothreonine). At S230 the chain carries Phosphoserine. Disordered regions lie at residues 233–273 and 289–571; these read SYPE…GIRK and LKEQ…KRHS. Positions 249-259 are enriched in basic and acidic residues; the sequence is SLYRLEKRPGR. Low complexity predominate over residues 315–348; sequence GTLGTLEEPTGTASVSPSSRAGGVAGVAGEAGPP. Residue T361 is modified to Phosphothreonine. Position 365 is a phosphoserine (S365). The span at 370-385 shows a compositional bias: pro residues; it reads LLPPKSSPDPAVNPVP. The segment covering 389–399 has biased composition (basic and acidic residues); sequence RTFEYEADKNP. Positions 406 to 428 are enriched in pro residues; it reads GLPPSPTPAAPPPLPSTPAPPVT. A compositionally biased stretch (basic residues) spans 429-443; the sequence is RRPKKDMRGHRKSQN. Polar residues predominate over residues 453-478; that stretch reads SSLQSLYPSSPTENGTESQPKFGSKS. The residue at position 479 (T479) is a Phosphothreonine. Composition is skewed to polar residues over residues 511–521 and 542–555; these read KSQQLSENSLD and SLKSNSQSLRSGNW. S542 carries the phosphoserine modification. Residues 559–570 are compositionally biased toward basic residues; sequence KSHRLPRLPKRH. Phosphoserine is present on residues S571 and S619. Positions 633 to 658 are disordered; the sequence is LSMSSLETASLRDENSESESDSDDRF. The uDENN domain maps to 695–843; that stretch reads EYFVVVSLKK…PFPAPGKTIK (149 aa). Residues 865–998 form the cDENN domain; it reads RLEHVDFECL…LQAALEQALE (134 aa). The 94-residue stretch at 1000 to 1093 folds into the dDENN domain; sequence KSELISQDSD…QDRELRKCRA (94 aa).

In terms of assembly, interacts with ITSN1 and GRB2. Isoform 1 interacts with the SH3 domain of ABL1. Post-translationally, phosphorylated. Phosphorylation decreases ITSN1 binding.

It is found in the cytoplasm. It localises to the cell cortex. The protein localises to the cell membrane. Its subcellular location is the recycling endosome. Its function is as follows. May be involved in cytoskeletal organization and tumorogenicity. Seems to be involved in a signaling transduction pathway leading to activation of MAPK1/ERK2. Plays a role in EGFR trafficking from recycling endosomes back to the cell membrane. In terms of biological role, guanine nucleotide exchange factor (GEF) which may activate RAB9A and RAB9B. Promotes the exchange of GDP to GTP, converting inactive GDP-bound Rab proteins into their active GTP-bound form. Functionally, may block ERK2 activation stimulated by ABL1. May alter cell morphology and cell growth. The chain is DENN domain-containing protein 2B (Dennd2b) from Mus musculus (Mouse).